The chain runs to 220 residues: Uracil-DNA glycosylase (220 aa).

Asp65 (proton acceptor) is an active-site residue.

The protein belongs to the uracil-DNA glycosylase (UDG) superfamily. UNG family.

The protein localises to the cytoplasm. It carries out the reaction Hydrolyzes single-stranded DNA or mismatched double-stranded DNA and polynucleotides, releasing free uracil.. Its function is as follows. Excises uracil residues from the DNA which can arise as a result of misincorporation of dUMP residues by DNA polymerase or due to deamination of cytosine. The sequence is that of Uracil-DNA glycosylase from Amoebophilus asiaticus (strain 5a2).